The primary structure comprises 351 residues: Probable dual-specificity RNA methyltransferase RlmN (351 aa).

Glutamate 97 (proton acceptor) is an active-site residue. One can recognise a Radical SAM core domain in the interval 103-337 (YDYGNTVCIS…VTVRKERGVD (235 aa)). A disulfide bond links cysteine 110 and cysteine 342. [4Fe-4S] cluster-binding residues include cysteine 117, cysteine 121, and cysteine 124. S-adenosyl-L-methionine contacts are provided by residues 166 to 167 (GE), serine 198, 221 to 223 (SLH), and asparagine 299. The active-site S-methylcysteine intermediate is the cysteine 342.

It belongs to the radical SAM superfamily. RlmN family. [4Fe-4S] cluster is required as a cofactor.

The protein localises to the cytoplasm. The catalysed reaction is adenosine(2503) in 23S rRNA + 2 reduced [2Fe-2S]-[ferredoxin] + 2 S-adenosyl-L-methionine = 2-methyladenosine(2503) in 23S rRNA + 5'-deoxyadenosine + L-methionine + 2 oxidized [2Fe-2S]-[ferredoxin] + S-adenosyl-L-homocysteine. The enzyme catalyses adenosine(37) in tRNA + 2 reduced [2Fe-2S]-[ferredoxin] + 2 S-adenosyl-L-methionine = 2-methyladenosine(37) in tRNA + 5'-deoxyadenosine + L-methionine + 2 oxidized [2Fe-2S]-[ferredoxin] + S-adenosyl-L-homocysteine. Its function is as follows. Specifically methylates position 2 of adenine 2503 in 23S rRNA and position 2 of adenine 37 in tRNAs. In Natranaerobius thermophilus (strain ATCC BAA-1301 / DSM 18059 / JW/NM-WN-LF), this protein is Probable dual-specificity RNA methyltransferase RlmN.